Reading from the N-terminus, the 198-residue chain is Putative pseudouridine methyltransferase (198 aa).

S-adenosyl-L-methionine is bound by residues Met132 and Cys186.

This sequence belongs to the methyltransferase superfamily. TrmY family.

The protein resides in the cytoplasm. The chain is Putative pseudouridine methyltransferase from Shewanella baltica (strain OS223).